Here is a 620-residue protein sequence, read N- to C-terminus: 1-deoxy-D-xylulose-5-phosphate synthase (620 aa).

Thiamine diphosphate contacts are provided by residues histidine 80 and glycine 121 to serine 123. Aspartate 152 serves as a coordination point for Mg(2+). Thiamine diphosphate-binding positions include glycine 153 to alanine 154, asparagine 181, tyrosine 288, and glutamate 370. A Mg(2+)-binding site is contributed by asparagine 181.

This sequence belongs to the transketolase family. DXPS subfamily. As to quaternary structure, homodimer. Mg(2+) serves as cofactor. It depends on thiamine diphosphate as a cofactor.

It carries out the reaction D-glyceraldehyde 3-phosphate + pyruvate + H(+) = 1-deoxy-D-xylulose 5-phosphate + CO2. It participates in metabolic intermediate biosynthesis; 1-deoxy-D-xylulose 5-phosphate biosynthesis; 1-deoxy-D-xylulose 5-phosphate from D-glyceraldehyde 3-phosphate and pyruvate: step 1/1. Its function is as follows. Catalyzes the acyloin condensation reaction between C atoms 2 and 3 of pyruvate and glyceraldehyde 3-phosphate to yield 1-deoxy-D-xylulose-5-phosphate (DXP). The chain is 1-deoxy-D-xylulose-5-phosphate synthase from Salmonella heidelberg (strain SL476).